The sequence spans 21 residues: Hemocyanin subunit 4 (21 aa).

It belongs to the tyrosinase family. Hemocyanin subfamily. As to expression, hemolymph.

It localises to the secreted. The protein resides in the extracellular space. In terms of biological role, hemocyanins are copper-containing oxygen carriers occurring freely dissolved in the hemolymph of many mollusks and arthropods. This chain is Hemocyanin subunit 4, found in Maja squinado (Mediterranean spider crab).